The following is a 294-amino-acid chain: Protein C3orf33 homolog (294 aa).

Residue alanine 2 is modified to N-acetylalanine. Residues 36 to 53 (LVQNISTGMAIAGIMLLI) form a helical membrane-spanning segment. Residues 244–271 (KPAGADLGSTKDSYHDSRRRASGKGKDS) are disordered.

The protein localises to the membrane. In terms of biological role, may play a role in transcription regulation. This Mus musculus (Mouse) protein is Protein C3orf33 homolog.